A 180-amino-acid polypeptide reads, in one-letter code: NAD(P)H-quinone oxidoreductase subunit I, chloroplastic (180 aa).

4Fe-4S ferredoxin-type domains follow at residues Gly-55–Lys-84 and Leu-95–Glu-124. Residues Cys-64, Cys-67, Cys-70, Cys-74, Cys-104, Cys-107, Cys-110, and Cys-114 each contribute to the [4Fe-4S] cluster site.

It belongs to the complex I 23 kDa subunit family. NDH is composed of at least 16 different subunits, 5 of which are encoded in the nucleus. [4Fe-4S] cluster is required as a cofactor.

It localises to the plastid. It is found in the chloroplast thylakoid membrane. It carries out the reaction a plastoquinone + NADH + (n+1) H(+)(in) = a plastoquinol + NAD(+) + n H(+)(out). The catalysed reaction is a plastoquinone + NADPH + (n+1) H(+)(in) = a plastoquinol + NADP(+) + n H(+)(out). Functionally, NDH shuttles electrons from NAD(P)H:plastoquinone, via FMN and iron-sulfur (Fe-S) centers, to quinones in the photosynthetic chain and possibly in a chloroplast respiratory chain. The immediate electron acceptor for the enzyme in this species is believed to be plastoquinone. Couples the redox reaction to proton translocation, and thus conserves the redox energy in a proton gradient. In Nandina domestica (Heavenly bamboo), this protein is NAD(P)H-quinone oxidoreductase subunit I, chloroplastic.